A 414-amino-acid chain; its full sequence is Patatin-like protein 1 (414 aa).

The PNPLA domain maps to 22–228; sequence LSLDGGGVRG…TANNPTLVAM (207 aa). The short motif at 26–31 is the GXGXXG element; it reads GGGVRG. Positions 64 to 68 match the GXSXG motif; sequence GTSTG. Serine 66 (nucleophile) is an active-site residue. Aspartate 215 serves as the catalytic Proton acceptor. A DGA/G motif is present at residues 215–217; sequence DGA. At serine 399 the chain carries Phosphoserine.

The protein belongs to the patatin family. Post-translationally, phosphorylated at Ser-399 by CPK3. Phosphorylation enhances PLP1 activity towards phosphatidylcholine. As to expression, expressed specifically in roots and root hairs.

It is found in the cytoplasm. Possesses non-specific lipolytic acyl hydrolase (LAH) activity. Catalyzes the hydrolysis of the neutral lipids monogalactosyldiacylglycerol (MGDG), digalactosyldiacylglycerol (DGDG) and phosphatidylglycerol (PG), and less efficiently the polar lipids phosphatidylcholine (PC) and phosphatidylinositol (PI), but not the storage lipid triacylglycerol (TAG). May play a role in root development. This Arabidopsis thaliana (Mouse-ear cress) protein is Patatin-like protein 1 (PLP1).